A 119-amino-acid chain; its full sequence is Protein yippee-like 3 (119 aa).

The 98-residue stretch at 19–116 (RRYSCVHCRA…IELSHMIKDN (98 aa)) folds into the Yippee domain. 4 residues coordinate Zn(2+): Cys23, Cys26, Cys79, and Cys82.

Belongs to the yippee family.

It localises to the nucleus. The protein localises to the nucleolus. Its function is as follows. May be involved in proliferation and apoptosis in myeloid precursor cells. The chain is Protein yippee-like 3 (ypel3) from Oryzias latipes (Japanese rice fish).